We begin with the raw amino-acid sequence, 237 residues long: Phosphoribosylaminoimidazole-succinocarboxamide synthase (237 aa).

This sequence belongs to the SAICAR synthetase family.

It catalyses the reaction 5-amino-1-(5-phospho-D-ribosyl)imidazole-4-carboxylate + L-aspartate + ATP = (2S)-2-[5-amino-1-(5-phospho-beta-D-ribosyl)imidazole-4-carboxamido]succinate + ADP + phosphate + 2 H(+). The protein operates within purine metabolism; IMP biosynthesis via de novo pathway; 5-amino-1-(5-phospho-D-ribosyl)imidazole-4-carboxamide from 5-amino-1-(5-phospho-D-ribosyl)imidazole-4-carboxylate: step 1/2. The polypeptide is Phosphoribosylaminoimidazole-succinocarboxamide synthase (Psychrobacter arcticus (strain DSM 17307 / VKM B-2377 / 273-4)).